The sequence spans 202 residues: COMM domain-containing protein 10 (202 aa).

Residue Ala2 is modified to N-acetylalanine. A COMM domain is found at 133–202; the sequence is KLETVGWQLN…TIQAQLDSLT (70 aa). A Phosphoserine modification is found at Ser155.

Belongs to the COMM domain-containing protein 10 family. As to quaternary structure, component of the commander complex consisting of the CCC subcomplex and the retriever subcomplex. Component of the CCC (COMMD/CCDC22/CCDC93) subcomplex consisting of COMMD1, COMMD2, COMMD3, COMMD4, COMMD5, COMMD6, COMMD7, COMMD8, COMMD9, COMMD10, CCDC22 and CCDC93; within the complex forms a heterodimer with COMMD5. Interacts with RELA, RELB, NFKB1/p105, NFKB2/p100. Interacts with CCDC22, CCDC93, SCNN1B, CUL1, CUL2, CUL3, CUL4A, CUL4B, CUL7. Ubiquitous.

The protein localises to the cytoplasm. Its subcellular location is the nucleus. Its function is as follows. Scaffold protein in the commander complex that is essential for endosomal recycling of transmembrane cargos; the commander complex is composed of the CCC subcomplex and the retriever subcomplex. May modulate activity of cullin-RING E3 ubiquitin ligase (CRL) complexes. May down-regulate activation of NF-kappa-B. In Homo sapiens (Human), this protein is COMM domain-containing protein 10 (COMMD10).